A 189-amino-acid polypeptide reads, in one-letter code: Elongation factor P (189 aa).

An N6-(3,6-diaminohexanoyl)-5-hydroxylysine modification is found at Lys34.

This sequence belongs to the elongation factor P family. In terms of processing, may be beta-lysylated on the epsilon-amino group of Lys-34 by the combined action of EpmA and EpmB, and then hydroxylated on the C5 position of the same residue by EpmC (if this protein is present). Lysylation is critical for the stimulatory effect of EF-P on peptide-bond formation. The lysylation moiety may extend toward the peptidyltransferase center and stabilize the terminal 3-CCA end of the tRNA. Hydroxylation of the C5 position on Lys-34 may allow additional potential stabilizing hydrogen-bond interactions with the P-tRNA.

It localises to the cytoplasm. Its pathway is protein biosynthesis; polypeptide chain elongation. Its function is as follows. Involved in peptide bond synthesis. Alleviates ribosome stalling that occurs when 3 or more consecutive Pro residues or the sequence PPG is present in a protein, possibly by augmenting the peptidyl transferase activity of the ribosome. Modification of Lys-34 is required for alleviation. This Baumannia cicadellinicola subsp. Homalodisca coagulata protein is Elongation factor P.